We begin with the raw amino-acid sequence, 376 residues long: 26S proteasome non-ATPase regulatory subunit 13 (376 aa).

Residues Ser171–Pro338 enclose the PCI domain. An N6-acetyllysine modification is found at Lys298.

It belongs to the proteasome subunit S11 family. In terms of assembly, component of the 19S proteasome regulatory particle complex. The 26S proteasome consists of a 20S core particle (CP) and two 19S regulatory subunits (RP). The regulatory particle is made of a lid composed of 9 subunits including PSMD13, a base containing 6 ATPases and few additional components.

In terms of biological role, component of the 26S proteasome, a multiprotein complex involved in the ATP-dependent degradation of ubiquitinated proteins. This complex plays a key role in the maintenance of protein homeostasis by removing misfolded or damaged proteins, which could impair cellular functions, and by removing proteins whose functions are no longer required. Therefore, the proteasome participates in numerous cellular processes, including cell cycle progression, apoptosis, or DNA damage repair. The polypeptide is 26S proteasome non-ATPase regulatory subunit 13 (Psmd13) (Mus musculus (Mouse)).